Reading from the N-terminus, the 406-residue chain is Odorant receptor 10a (406 aa).

At 1–45 the chain is on the cytoplasmic side; the sequence is MSEWLRFLKRDQQLDVYFFAVPRLSLDIMGYWPGKTGDTWPWRSL. The helical transmembrane segment at 46 to 66 threads the bilayer; that stretch reads IHFAILAIGVATELHAGMCFL. Residues 67-74 are Extracellular-facing; it reads DRQQITLA. A helical transmembrane segment spans residues 75–95; sequence LETLCPAGTSAVTLLKMFLML. The Cytoplasmic portion of the chain corresponds to 96–143; that stretch reads RFRQDLSIMWNRLRGLLFDPNWERPEQRDIRLKHSAMAARINFWPLSA. Residues 144-164 traverse the membrane as a helical segment; it reads GFFTCTTYNLKPILIAMILYL. Over 165-189 the chain is Extracellular; the sequence is QNRYEDFVWFTPFNMTMPKVLLNYP. Residue Asn-178 is glycosylated (N-linked (GlcNAc...) asparagine). The chain crosses the membrane as a helical span at residues 190 to 210; it reads FFPLTYIFIAYTGYVTIFMFG. Residues 211 to 281 are Cytoplasmic-facing; sequence GCDGFYFEFC…LTRFFRDRYT (71 aa). A helical transmembrane segment spans residues 282 to 302; it reads IITLAHFVSAAMVIGFSMVNL. Residues 303–308 are Extracellular-facing; that stretch reads LTLGNN. The chain crosses the membrane as a helical span at residues 309 to 329; the sequence is GLGAMLYVAYTVAALSQLLVY. At 330-372 the chain is on the cytoplasmic side; the sequence is CYGGTLVAESSTGLCRAMFSCPWQLFKPKQRRLVQLLILRSQR. The helical transmembrane segment at 373 to 393 threads the bilayer; it reads PVSMAVPFFSPSLATFAAILQ. Topologically, residues 394-406 are extracellular; it reads TSGSIIALVKSFQ.

The protein belongs to the insect chemoreceptor superfamily. Heteromeric odorant receptor channel (TC 1.A.69) family. Or1a subfamily. In terms of assembly, interacts with Orco. Complexes exist early in the endomembrane system in olfactory sensory neurons (OSNs), coupling these complexes to the conserved ciliary trafficking pathway. Expressed in olfactory sensory neurons in the antenna.

It is found in the cell membrane. Its function is as follows. Odorant receptor which mediates acceptance or avoidance behavior, depending on its substrates. The odorant receptor repertoire encodes a large collection of odor stimuli that vary widely in identity, intensity, and duration. May form a complex with Orco to form odorant-sensing units, providing sensitive and prolonged odorant signaling and calcium permeability. Involved in the behavioral responses to esters, and specifically to ethyl hexanoate, benzaldehyde, and acetophenone. The protein is Odorant receptor 10a (Or10a) of Drosophila melanogaster (Fruit fly).